We begin with the raw amino-acid sequence, 297 residues long: UDP-N-acetylenolpyruvoylglucosamine reductase (297 aa).

The 166-residue stretch at 26 to 191 (QTGGPAEYLA…IAATFALKAG (166 aa)) folds into the FAD-binding PCMH-type domain. Residue arginine 170 is part of the active site. Serine 220 functions as the Proton donor in the catalytic mechanism. The active site involves glutamate 290.

The protein belongs to the MurB family. The cofactor is FAD.

The protein localises to the cytoplasm. The catalysed reaction is UDP-N-acetyl-alpha-D-muramate + NADP(+) = UDP-N-acetyl-3-O-(1-carboxyvinyl)-alpha-D-glucosamine + NADPH + H(+). The protein operates within cell wall biogenesis; peptidoglycan biosynthesis. In terms of biological role, cell wall formation. The chain is UDP-N-acetylenolpyruvoylglucosamine reductase from Lactobacillus delbrueckii subsp. bulgaricus (strain ATCC 11842 / DSM 20081 / BCRC 10696 / JCM 1002 / NBRC 13953 / NCIMB 11778 / NCTC 12712 / WDCM 00102 / Lb 14).